The chain runs to 245 residues: Ubiquinone/menaquinone biosynthesis C-methyltransferase UbiE (245 aa).

Residues T71, D92, and 118–119 contribute to the S-adenosyl-L-methionine site; that span reads DA.

The protein belongs to the class I-like SAM-binding methyltransferase superfamily. MenG/UbiE family.

The enzyme catalyses a 2-demethylmenaquinol + S-adenosyl-L-methionine = a menaquinol + S-adenosyl-L-homocysteine + H(+). It carries out the reaction a 2-methoxy-6-(all-trans-polyprenyl)benzene-1,4-diol + S-adenosyl-L-methionine = a 5-methoxy-2-methyl-3-(all-trans-polyprenyl)benzene-1,4-diol + S-adenosyl-L-homocysteine + H(+). Its pathway is quinol/quinone metabolism; menaquinone biosynthesis; menaquinol from 1,4-dihydroxy-2-naphthoate: step 2/2. It functions in the pathway cofactor biosynthesis; ubiquinone biosynthesis. In terms of biological role, methyltransferase required for the conversion of demethylmenaquinol (DMKH2) to menaquinol (MKH2) and the conversion of 2-polyprenyl-6-methoxy-1,4-benzoquinol (DDMQH2) to 2-polyprenyl-3-methyl-6-methoxy-1,4-benzoquinol (DMQH2). The polypeptide is Ubiquinone/menaquinone biosynthesis C-methyltransferase UbiE (Neisseria meningitidis serogroup C (strain 053442)).